The sequence spans 333 residues: Taste receptor type 2 member 123 (333 aa).

Topologically, residues 1-14 are extracellular; sequence MFSQKTNYSHLFTF. The chain crosses the membrane as a helical span at residues 15–37; sequence SIIFYVEIVTGILGNGFIALVNI. Over 38 to 57 the chain is Cytoplasmic; sequence MDWLKRRRISTADQILTALA. The helical transmembrane segment at 58 to 77 threads the bilayer; that stretch reads LTRLIYVWSVLICILLLFLC. Over 78–91 the chain is Extracellular; sequence PHLSMRPEMFTAIG. The helical transmembrane segment at 92 to 114 threads the bilayer; that stretch reads VIWVVDNHFSIWLATCLGVFYFL. Residues 115–133 are Cytoplasmic-facing; it reads KIASFSNSLFLYLKWRVKK. A helical transmembrane segment spans residues 134–156; sequence VVLMIILISLIFLMLNISSLGMY. Topologically, residues 157 to 204 are extracellular; it reads DHFSIDVYEGNMSYNLVDSTHFPRIFLFTNSSKVFLIANSSHVFLPIN. N167, N186, and N195 each carry an N-linked (GlcNAc...) asparagine glycan. A helical transmembrane segment spans residues 205–227; the sequence is SLFMLIPFTVSLVAFFVLFLSLW. At 228–250 the chain is on the cytoplasmic side; it reads KHHKKMQVNAKGPRDASTMAHTK. Residues 251 to 273 traverse the membrane as a helical segment; it reads ALQIGFSFLLLYAIYLLFIITGI. At 274-282 the chain is on the extracellular side; sequence LNLDLMRCI. A helical membrane pass occupies residues 283–305; the sequence is VILLFDHISGAVFSISHSFVLIL. Residues 306 to 333 are Cytoplasmic-facing; sequence GNSKLRQATLSVLPCLRCRSKDMDTVVF.

The protein belongs to the G-protein coupled receptor T2R family. As to expression, expressed in subsets of taste receptor cells of the tongue and palate epithelium and exclusively in gustducin-positive cells. Expressed in the antrum and fundus (part of the stomach), duodenum and in gastric endocrine cells.

The protein localises to the membrane. Functionally, gustducin-coupled receptor implicated in the perception of bitter compounds in the oral cavity and the gastrointestinal tract. Signals through PLCB2 and the calcium-regulated cation channel TRPM5. The sequence is that of Taste receptor type 2 member 123 (Tas2r123) from Rattus norvegicus (Rat).